The primary structure comprises 178 residues: Large ribosomal subunit protein uL6 (178 aa).

The protein belongs to the universal ribosomal protein uL6 family. As to quaternary structure, part of the 50S ribosomal subunit.

This protein binds to the 23S rRNA, and is important in its secondary structure. It is located near the subunit interface in the base of the L7/L12 stalk, and near the tRNA binding site of the peptidyltransferase center. In Nitratiruptor sp. (strain SB155-2), this protein is Large ribosomal subunit protein uL6.